We begin with the raw amino-acid sequence, 366 residues long: Tyrosyl-DNA phosphodiesterase 2 (366 aa).

M1 is subject to N-acetylmethionine. A compositionally biased stretch (low complexity) spans 1-22 (MASGSSSDAAESAEPAAAPAAA). The segment at 1 to 30 (MASGSSSDAAESAEPAAAPAAAETEEDQVK) is disordered. K30 is covalently cross-linked (Glycyl lysine isopeptide (Lys-Gly) (interchain with G-Cter in SUMO2)). At T95 the chain carries Phosphothreonine; by ACVR1B. Positions 126 to 130 (NIDGL) are interaction with 5' end of substrate DNA. Residues D128 and E158 each coordinate Mg(2+). Positions 232-237 (HLESTR) are interaction with 5' end of substrate DNA. D268 serves as the catalytic Proton donor/acceptor. The segment at 270-272 (NLR) is interaction with 5' end of substrate DNA.

Belongs to the CCR4/nocturin family. Interacts with TRAF2, TRAF3, TRAF5, TRAF6, TNFRSF8/CD30, TNFRSF5/CD40, TNFRSF1B/TNF-R75, ETS1, ETS2, FLI1, SMAD3 and ACVR1B/ALK4. It depends on Mg(2+) as a cofactor. The cofactor is Mn(2+). Ubiquitinated by TRAF6.

The protein resides in the nucleus. It localises to the PML body. Its subcellular location is the nucleolus. It is found in the cytoplasm. Functionally, DNA repair enzyme that can remove a variety of covalent adducts from DNA through hydrolysis of a 5'-phosphodiester bond, giving rise to DNA with a free 5' phosphate. Catalyzes the hydrolysis of dead-end complexes between DNA and the topoisomerase 2 (TOP2) active site tyrosine residue. The 5'-tyrosyl DNA phosphodiesterase activity can enable the repair of TOP2-induced DNA double-strand breaks/DSBs without the need for nuclease activity, creating a 'clean' DSB with 5'-phosphate termini that are ready for ligation. Thereby, protects the transcription of many genes involved in neurological development and maintenance from the abortive activity of TOP2. Hydrolyzes 5'-phosphoglycolates on protruding 5' ends on DSBs due to DNA damage by radiation and free radicals. Has preference for single-stranded DNA or duplex DNA with a 4 base pair overhang as substrate. Also has 3'-tyrosyl DNA phosphodiesterase activity, but less efficiently and much slower than TDP1. Constitutes the major if not only 5'-tyrosyl-DNA phosphodiesterase in cells. Also acts as an adapter by participating in the specific activation of MAP3K7/TAK1 in response to TGF-beta: associates with components of the TGF-beta receptor-TRAF6-TAK1 signaling module and promotes their ubiquitination dependent complex formation. Involved in non-canonical TGF-beta induced signaling routes. May also act as a negative regulator of ETS1 and may inhibit NF-kappa-B activation. Acts as a regulator of ribosome biogenesis following stress. The sequence is that of Tyrosyl-DNA phosphodiesterase 2 (Tdp2) from Rattus norvegicus (Rat).